Here is a 638-residue protein sequence, read N- to C-terminus: Acetolactate synthase 1, chloroplastic (638 aa).

The segment covering 1–19 (MATAAAASTALTGATTAAP) has biased composition (low complexity). Residues 1 to 23 (MATAAAASTALTGATTAAPKARR) form a disordered region. The transit peptide at 1–39 (MATAAAASTALTGATTAAPKARRRAHLLATRRALAAPIR) directs the protein to the chloroplast. Glutamate 112 contacts thiamine diphosphate. Cysteine 132 and cysteine 278 are joined by a disulfide. Residues arginine 214, 320–341 (HGTVYANYAVDKADLLLALGVR), and 363–382 (DIDPAEIGKNKQPHVSICAD) each bind FAD. The interval 455–535 (QHQMWAAQYY…VKVFVLNNQH (81 aa)) is thiamine pyrophosphate binding. Mg(2+)-binding residues include aspartate 506 and asparagine 533.

Belongs to the TPP enzyme family. Mg(2+) serves as cofactor. Thiamine diphosphate is required as a cofactor.

The protein localises to the plastid. It is found in the chloroplast. The catalysed reaction is 2 pyruvate + H(+) = (2S)-2-acetolactate + CO2. It participates in amino-acid biosynthesis; L-isoleucine biosynthesis; L-isoleucine from 2-oxobutanoate: step 1/4. The protein operates within amino-acid biosynthesis; L-valine biosynthesis; L-valine from pyruvate: step 1/4. In Zea mays (Maize), this protein is Acetolactate synthase 1, chloroplastic (ALS1).